A 58-amino-acid chain; its full sequence is Mu-diguetoxin-Dc1b (58 aa).

4 cysteine pairs are disulfide-bonded: C12-C26, C20-C40, C25-C54, and C42-C52.

It belongs to the neurotoxin 26 (DTX) family. Expressed by the venom gland.

Its subcellular location is the secreted. Acts by delaying the inactivation of presynaptic voltage-sensitive sodium channels (Nav). Acts against insects and cause a progressive spastic paralysis. The sequence is that of Mu-diguetoxin-Dc1b from Diguetia canities (Desert bush spider).